The chain runs to 212 residues: External core antigen (212 aa).

Positions 1–19 (MQLFHLCLIISCSCPTVQA) are cleaved as a signal peptide. The segment at 25 to 27 (GWL) is HBEAG. The interval 172-212 (LPETTVVRRRGRSPRRRTPSPRRRRSKSPRRRRSQSRESQC) is disordered. The segment covering 178-205 (VRRRGRSPRRRTPSPRRRRSKSPRRRRS) has biased composition (basic residues). The 1; half-length repeat unit spans residues 184-189 (SPRRRT). Positions 184–205 (SPRRRTPSPRRRRSKSPRRRRS) are 3 X 7 AA repeats of S-P-R-R-R-R-S. Positions 184 to 212 (SPRRRTPSPRRRRSKSPRRRRSQSRESQC) are excised as a propeptide. 2 tandem repeats follow at residues 191–197 (SPRRRRS) and 199–205 (SPRRRRS).

It belongs to the orthohepadnavirus precore antigen family. As to quaternary structure, homodimerizes. In terms of processing, phosphorylated. Post-translationally, cleaved by host furin.

The protein resides in the secreted. It is found in the host nucleus. In terms of biological role, may regulate immune response to the intracellular capsid in acting as a T-cell tolerogen, by having an immunoregulatory effect which prevents destruction of infected cells by cytotoxic T-cells. This immune regulation may predispose to chronicity during perinatal infections and prevent severe liver injury during adult infections. This Hepatitis B virus genotype C subtype adr (isolate Japan/Nishioka/1983) (HBV-C) protein is External core antigen.